The sequence spans 177 residues: Endoribonuclease YbeY (177 aa).

Zn(2+)-binding residues include histidine 118, histidine 122, and histidine 128.

The protein belongs to the endoribonuclease YbeY family. Zn(2+) is required as a cofactor.

It is found in the cytoplasm. Its function is as follows. Single strand-specific metallo-endoribonuclease involved in late-stage 70S ribosome quality control and in maturation of the 3' terminus of the 16S rRNA. In Mycolicibacterium paratuberculosis (strain ATCC BAA-968 / K-10) (Mycobacterium paratuberculosis), this protein is Endoribonuclease YbeY.